Reading from the N-terminus, the 386-residue chain is Probable pectin lyase F (386 aa).

The first 16 residues, 1–16 (MKTAVLSLLLALQAYA), serve as a signal peptide directing secretion. Cysteine 77 and cysteine 101 are oxidised to a cystine. An N-linked (GlcNAc...) asparagine glycan is attached at asparagine 124. The active site involves arginine 251. Cysteine 326 and cysteine 334 are joined by a disulfide.

The protein belongs to the polysaccharide lyase 1 family.

The protein localises to the secreted. It carries out the reaction Eliminative cleavage of (1-&gt;4)-alpha-D-galacturonan methyl ester to give oligosaccharides with 4-deoxy-6-O-methyl-alpha-D-galact-4-enuronosyl groups at their non-reducing ends.. In terms of biological role, pectinolytic enzymes consist of four classes of enzymes: pectin lyase, polygalacturonase, pectin methylesterase and rhamnogalacturonase. Among pectinolytic enzymes, pectin lyase is the most important in depolymerization of pectin, since it cleaves internal glycosidic bonds of highly methylated pectins. The protein is Probable pectin lyase F (pelF) of Neosartorya fischeri (strain ATCC 1020 / DSM 3700 / CBS 544.65 / FGSC A1164 / JCM 1740 / NRRL 181 / WB 181) (Aspergillus fischerianus).